The sequence spans 382 residues: Prostaglandin D2 receptor 2 (382 aa).

The Extracellular portion of the chain corresponds to 1-32 (MANVTLKPLCPLLEEMVQLPNHSNSSLRYIDH). N-linked (GlcNAc...) asparagine glycosylation is found at N3, N21, and N24. A helical membrane pass occupies residues 33–55 (VSVLLHGLASLLGLVENGLILFV). Residues 56–66 (VGCRMRQTVVT) lie on the Cytoplasmic side of the membrane. Residues 67–88 (TWVLHLALSDLLAAASLPFFTY) traverse the membrane as a helical segment. Residues 89–105 (FLAVGHSWELGTTFCKL) are Extracellular-facing. Residues C103 and C181 are joined by a disulfide bond. Residues 106–126 (HSSVFFLNMFASGFLLSAISL) form a helical membrane-spanning segment. Topologically, residues 127-145 (DRCLQVVRPVWAQNHRTVA) are cytoplasmic. Residues 146–167 (VAHRVCLMLWALAVLNTIPYFV) traverse the membrane as a helical segment. Topologically, residues 168–209 (FRDTIPRLDGRIMCYYNLLLWNPGPDRDTTCDYRQKALAVSK) are extracellular. The chain crosses the membrane as a helical span at residues 210-230 (FLLAFMVPLAIIASSHVAVSL). Topologically, residues 231–246 (RLHHRGRQRTGRFVRL) are cytoplasmic. Residues 247 to 268 (VAAIVVAFVLCWGPYHIFSLLE) traverse the membrane as a helical segment. At 269–287 (ARAHSVTTLRQLASRGLPF) the chain is on the extracellular side. The chain crosses the membrane as a helical span at residues 288–307 (VTSLAFFNSVVNPLLYVFTC). The Cytoplasmic portion of the chain corresponds to 308-357 (PDMLYKLRRSLRAVLESVLVEDSDQSGGLRNRRRRASSTATPASTLLLAD). Positions 329–332 (DSDQ) match the Involved in the recycling of CRTH2 motif. Phosphoserine is present on residues S330 and S344.

This sequence belongs to the G-protein coupled receptor 1 family. Post-translationally, phosphorylated.

The protein resides in the cell membrane. Its function is as follows. Receptor for prostaglandin D2 (PGD2). Coupled to the G(i)-protein. Receptor activation may result in pertussis toxin-sensitive decreases in cAMP levels and Ca(2+) mobilization. PI3K signaling is also implicated in mediating PTGDR2 effects. PGD2 induced receptor internalization. CRTH2 internalization can be regulated by diverse kinases such as, PKC, PKA, GRK2, GPRK5/GRK5 and GRK6. Receptor activation is responsible, at least in part, in immune regulation and allergic/inflammation responses. This is Prostaglandin D2 receptor 2 (Ptgdr2) from Mus musculus (Mouse).